The primary structure comprises 189 residues: Coatomer subunit zeta (189 aa).

Belongs to the adaptor complexes small subunit family. Oligomeric complex that consists of at least the alpha, beta, beta', gamma, delta, epsilon and zeta subunits.

The protein localises to the cytoplasm. It is found in the golgi apparatus membrane. The protein resides in the cytoplasmic vesicle. Its subcellular location is the COPI-coated vesicle membrane. The coatomer is a cytosolic protein complex that binds to dilysine motifs and reversibly associates with Golgi non-clathrin-coated vesicles, which further mediate biosynthetic protein transport from the ER, via the Golgi up to the trans Golgi network. Coatomer complex is required for budding from Golgi membranes, and is essential for the retrograde Golgi-to-ER transport of dilysine-tagged proteins. The zeta subunit may be involved in regulating the coat assembly and, hence, the rate of biosynthetic protein transport due to its association-dissociation properties with the coatomer complex. This Saccharomyces cerevisiae (strain ATCC 204508 / S288c) (Baker's yeast) protein is Coatomer subunit zeta (RET3).